Here is a 543-residue protein sequence, read N- to C-terminus: uncharacterized protein (543 aa).

Residues 1–59 (MLKKNDIVEVEIVDLTHEGAGVAKVDGLVFFVENALPSEKILMRVLKVNKKIGFGKVEK) form the TRAM domain. Residues Gln283, Tyr312, Glu333, and Asp381 each contribute to the S-adenosyl-L-methionine site. The active-site Nucleophile is Cys408.

The protein belongs to the class I-like SAM-binding methyltransferase superfamily. RNA M5U methyltransferase family.

This is an uncharacterized protein from Streptococcus pneumoniae (strain ATCC BAA-255 / R6).